The chain runs to 307 residues: tRNA pseudouridine synthase B (307 aa).

The active-site Nucleophile is the aspartate 41.

The protein belongs to the pseudouridine synthase TruB family. Type 1 subfamily.

It catalyses the reaction uridine(55) in tRNA = pseudouridine(55) in tRNA. Its function is as follows. Responsible for synthesis of pseudouridine from uracil-55 in the psi GC loop of transfer RNAs. The polypeptide is tRNA pseudouridine synthase B (Prochlorococcus marinus (strain AS9601)).